A 246-amino-acid chain; its full sequence is Predicted GPI-anchored protein 33 (246 aa).

Residues 1 to 16 (MRGIILLSFVLTSCLA) form the signal peptide. The N-linked (GlcNAc...) asparagine glycan is linked to asparagine 214. Asparagine 219 is lipidated: GPI-anchor amidated asparagine. A propeptide spans 220-246 (AAGVYSTNSVLVFVSICIGFIGGSLGI) (removed in mature form).

It localises to the cell membrane. The chain is Predicted GPI-anchored protein 33 (PGA33) from Candida albicans (strain SC5314 / ATCC MYA-2876) (Yeast).